Reading from the N-terminus, the 269-residue chain is Glutamate 5-kinase 2 (269 aa).

Lys16 is a binding site for ATP. Substrate-binding residues include Ser57, Asp144, and Asn156. 218–224 (SGGMISK) contacts ATP.

The protein belongs to the glutamate 5-kinase family.

The protein localises to the cytoplasm. It carries out the reaction L-glutamate + ATP = L-glutamyl 5-phosphate + ADP. The protein operates within amino-acid biosynthesis; L-proline biosynthesis; L-glutamate 5-semialdehyde from L-glutamate: step 1/2. In terms of biological role, catalyzes the transfer of a phosphate group to glutamate to form L-glutamate 5-phosphate. This Rhizobium meliloti (strain 1021) (Ensifer meliloti) protein is Glutamate 5-kinase 2.